The sequence spans 63 residues: Prokaryotic ubiquitin-like protein Pup (63 aa).

A compositionally biased stretch (basic and acidic residues) spans 1-11 (MAQEQTRRGGG). Residues 1 to 36 (MAQEQTRRGGGGDDDEFTSSTSVGQERREKLTEETD) are disordered. The segment at 20–57 (STSVGQERREKLTEETDDLLDEIDDVLEENAEDFVRAY) is ARC ATPase binding. Positions 23–51 (VGQERREKLTEETDDLLDEIDDVLEENAE) form a coiled coil. Gln-63 is subject to Deamidated glutamine. An Isoglutamyl lysine isopeptide (Gln-Lys) (interchain with K-? in acceptor proteins) cross-link involves residue Gln-63.

It belongs to the prokaryotic ubiquitin-like protein family. As to quaternary structure, strongly interacts with the proteasome-associated ATPase ARC through a hydrophobic interface; the interacting region of Pup lies in its C-terminal half. There is one Pup binding site per ARC hexamer ring. Post-translationally, is modified by deamidation of its C-terminal glutamine to glutamate by the deamidase Dop, a prerequisite to the subsequent pupylation process.

It participates in protein degradation; proteasomal Pup-dependent pathway. Its function is as follows. Protein modifier that is covalently attached to lysine residues of substrate proteins, thereby targeting them for proteasomal degradation. The tagging system is termed pupylation. This is Prokaryotic ubiquitin-like protein Pup from Mycobacterium leprae (strain Br4923).